The sequence spans 154 residues: Ribonuclease H (154 aa).

In terms of domain architecture, RNase H type-1 spans 1-142; it reads MLKKIDLYTD…CDELAREAAS (142 aa). Positions 10, 48, 70, and 134 each coordinate Mg(2+). Residues 133–154 are disordered; sequence CDELAREAASGKQLAEDTGYQP.

It belongs to the RNase H family. In terms of assembly, monomer. Mg(2+) serves as cofactor.

The protein resides in the cytoplasm. It carries out the reaction Endonucleolytic cleavage to 5'-phosphomonoester.. In terms of biological role, endonuclease that specifically degrades the RNA of RNA-DNA hybrids. The polypeptide is Ribonuclease H (Aeromonas hydrophila subsp. hydrophila (strain ATCC 7966 / DSM 30187 / BCRC 13018 / CCUG 14551 / JCM 1027 / KCTC 2358 / NCIMB 9240 / NCTC 8049)).